The sequence spans 396 residues: Elongation factor Tu (396 aa).

In terms of domain architecture, tr-type G spans 10–206 (KPHVNIGTIG…AVDAYIPEPE (197 aa)). The tract at residues 19-26 (GHVDHGKT) is G1. 19–26 (GHVDHGKT) lines the GTP pocket. Threonine 26 serves as a coordination point for Mg(2+). The tract at residues 60–64 (GITIS) is G2. The G3 stretch occupies residues 81–84 (DCPG). Residues 81-85 (DCPGH) and 136-139 (NKVD) each bind GTP. The segment at 136–139 (NKVD) is G4. Positions 174 to 176 (SAL) are G5.

The protein belongs to the TRAFAC class translation factor GTPase superfamily. Classic translation factor GTPase family. EF-Tu/EF-1A subfamily. In terms of assembly, monomer.

Its subcellular location is the cytoplasm. The enzyme catalyses GTP + H2O = GDP + phosphate + H(+). GTP hydrolase that promotes the GTP-dependent binding of aminoacyl-tRNA to the A-site of ribosomes during protein biosynthesis. This Magnetococcus marinus (strain ATCC BAA-1437 / JCM 17883 / MC-1) protein is Elongation factor Tu.